The sequence spans 114 residues: Gene 37 protein (114 aa).

This chain is Gene 37 protein (37), found in Mycobacterium (Mycobacteriophage L5).